Here is a 267-residue protein sequence, read N- to C-terminus: 4-hydroxy-tetrahydrodipicolinate reductase (267 aa).

NAD(+) is bound by residues 8-13 (GAAGRM) and Asp-34. Residue Arg-35 participates in NADP(+) binding. NAD(+)-binding positions include 98-100 (GTT) and 122-125 (AANF). His-155 serves as the catalytic Proton donor/acceptor. His-156 contributes to the (S)-2,3,4,5-tetrahydrodipicolinate binding site. Catalysis depends on Lys-159, which acts as the Proton donor. 165-166 (GT) is a (S)-2,3,4,5-tetrahydrodipicolinate binding site.

It belongs to the DapB family.

It is found in the cytoplasm. The enzyme catalyses (S)-2,3,4,5-tetrahydrodipicolinate + NAD(+) + H2O = (2S,4S)-4-hydroxy-2,3,4,5-tetrahydrodipicolinate + NADH + H(+). It carries out the reaction (S)-2,3,4,5-tetrahydrodipicolinate + NADP(+) + H2O = (2S,4S)-4-hydroxy-2,3,4,5-tetrahydrodipicolinate + NADPH + H(+). The protein operates within amino-acid biosynthesis; L-lysine biosynthesis via DAP pathway; (S)-tetrahydrodipicolinate from L-aspartate: step 4/4. In terms of biological role, catalyzes the conversion of 4-hydroxy-tetrahydrodipicolinate (HTPA) to tetrahydrodipicolinate. The sequence is that of 4-hydroxy-tetrahydrodipicolinate reductase from Pseudomonas putida (strain ATCC 47054 / DSM 6125 / CFBP 8728 / NCIMB 11950 / KT2440).